A 258-amino-acid chain; its full sequence is Acyl-[acyl-carrier-protein]--UDP-N-acetylglucosamine O-acyltransferase (258 aa).

The protein belongs to the transferase hexapeptide repeat family. LpxA subfamily. Homotrimer.

It is found in the cytoplasm. It carries out the reaction a (3R)-hydroxyacyl-[ACP] + UDP-N-acetyl-alpha-D-glucosamine = a UDP-3-O-[(3R)-3-hydroxyacyl]-N-acetyl-alpha-D-glucosamine + holo-[ACP]. The protein operates within glycolipid biosynthesis; lipid IV(A) biosynthesis; lipid IV(A) from (3R)-3-hydroxytetradecanoyl-[acyl-carrier-protein] and UDP-N-acetyl-alpha-D-glucosamine: step 1/6. Its function is as follows. Involved in the biosynthesis of lipid A, a phosphorylated glycolipid that anchors the lipopolysaccharide to the outer membrane of the cell. This chain is Acyl-[acyl-carrier-protein]--UDP-N-acetylglucosamine O-acyltransferase, found in Ectopseudomonas mendocina (strain ymp) (Pseudomonas mendocina).